The sequence spans 337 residues: RNA 3'-terminal phosphate cyclase (337 aa).

Residues Gln101 and 282-285 (HMSD) each bind ATP. The active-site Tele-AMP-histidine intermediate is His306.

It belongs to the RNA 3'-terminal cyclase family. Type 1 subfamily.

The protein localises to the cytoplasm. The enzyme catalyses a 3'-end 3'-phospho-ribonucleotide-RNA + ATP = a 3'-end 2',3'-cyclophospho-ribonucleotide-RNA + AMP + diphosphate. Its function is as follows. Catalyzes the conversion of 3'-phosphate to a 2',3'-cyclic phosphodiester at the end of RNA. The mechanism of action of the enzyme occurs in 3 steps: (A) adenylation of the enzyme by ATP; (B) transfer of adenylate to an RNA-N3'P to produce RNA-N3'PP5'A; (C) and attack of the adjacent 2'-hydroxyl on the 3'-phosphorus in the diester linkage to produce the cyclic end product. The biological role of this enzyme is unknown but it is likely to function in some aspects of cellular RNA processing. This chain is RNA 3'-terminal phosphate cyclase (rtcA), found in Saccharolobus solfataricus (strain ATCC 35092 / DSM 1617 / JCM 11322 / P2) (Sulfolobus solfataricus).